Consider the following 241-residue polypeptide: Adenosylcobinamide-GDP ribazoletransferase (241 aa).

Transmembrane regions (helical) follow at residues 24–44 (IVFF…SIFY), 48–68 (FINQ…IYGF), 103–123 (VVTF…FNSI), 175–195 (VIIL…FSLI), and 218–238 (IIGF…LISF).

This sequence belongs to the CobS family. The cofactor is Mg(2+).

It is found in the cell membrane. The catalysed reaction is alpha-ribazole + adenosylcob(III)inamide-GDP = adenosylcob(III)alamin + GMP + H(+). The enzyme catalyses alpha-ribazole 5'-phosphate + adenosylcob(III)inamide-GDP = adenosylcob(III)alamin 5'-phosphate + GMP + H(+). It participates in cofactor biosynthesis; adenosylcobalamin biosynthesis; adenosylcobalamin from cob(II)yrinate a,c-diamide: step 7/7. In terms of biological role, joins adenosylcobinamide-GDP and alpha-ribazole to generate adenosylcobalamin (Ado-cobalamin). Also synthesizes adenosylcobalamin 5'-phosphate from adenosylcobinamide-GDP and alpha-ribazole 5'-phosphate. The polypeptide is Adenosylcobinamide-GDP ribazoletransferase (Picrophilus torridus (strain ATCC 700027 / DSM 9790 / JCM 10055 / NBRC 100828 / KAW 2/3)).